The primary structure comprises 344 residues: Uroporphyrinogen decarboxylase (344 aa).

Substrate is bound by residues 23–27 (RQAGR), Asp73, Tyr149, Thr204, and His321.

The protein belongs to the uroporphyrinogen decarboxylase family. Homodimer.

Its subcellular location is the cytoplasm. The catalysed reaction is uroporphyrinogen III + 4 H(+) = coproporphyrinogen III + 4 CO2. It functions in the pathway porphyrin-containing compound metabolism; protoporphyrin-IX biosynthesis; coproporphyrinogen-III from 5-aminolevulinate: step 4/4. Its function is as follows. Catalyzes the decarboxylation of four acetate groups of uroporphyrinogen-III to yield coproporphyrinogen-III. The sequence is that of Uroporphyrinogen decarboxylase from Francisella tularensis subsp. mediasiatica (strain FSC147).